A 381-amino-acid chain; its full sequence is MLRFARSLYPLILSVTKSDPERGHQRLIQTLKKVDTMHRNGFAVAMEQLEQAFTHADPRLQQTCWGLNFPNVLGLSAGCDKEGEAAAVWPALGFGFAELGAVTKYAQPGNDRPRLFRLPQDQAVLNRLGANNEGAVAMAAKLKHTWDYYPRTIPIGINLCKSKITPLDQAVEDYVFSFQTLAPVADYFVVNVSSPNTPGLRSLQESDELPRIFAGLQSANHWQKPLLVKISPDLSWEAIAVIIDLVKEHNLSGIVATNTSTRRSGLKTKILPQTGQPIEQEAGGLSGQPIRDRATEVIRYIYQQTGGTIPIIGVGGIFTAEDAWEKIQAGASFLQIYTGWIYGGPWVVSDILQGLGEKLAAGGFSHISEAVGIDTIGKAPE.

FMN-binding positions include 77-81 (AGCDK) and alanine 101. A substrate-binding site is contributed by lysine 81. Substrate is bound at residue 126–129 (NRLG). FMN is bound by residues asparagine 158 and asparagine 191. Position 191 (asparagine 191) interacts with substrate. Residue serine 194 is the Nucleophile of the active site. Asparagine 196 provides a ligand contact to substrate. Residues lysine 229 and threonine 257 each coordinate FMN. 258–259 (NT) serves as a coordination point for substrate. Residues glycine 287, glycine 316, and 337–338 (YT) each bind FMN.

This sequence belongs to the dihydroorotate dehydrogenase family. Type 2 subfamily. As to quaternary structure, monomer. It depends on FMN as a cofactor.

It is found in the cell membrane. It catalyses the reaction (S)-dihydroorotate + a quinone = orotate + a quinol. It functions in the pathway pyrimidine metabolism; UMP biosynthesis via de novo pathway; orotate from (S)-dihydroorotate (quinone route): step 1/1. Its function is as follows. Catalyzes the conversion of dihydroorotate to orotate with quinone as electron acceptor. The protein is Dihydroorotate dehydrogenase (quinone) (pyrD) of Synechocystis sp. (strain ATCC 27184 / PCC 6803 / Kazusa).